The sequence spans 680 residues: DNA-directed RNA polymerase subunit beta' (680 aa).

4 residues coordinate Zn(2+): Cys-69, Cys-71, Cys-87, and Cys-90. Asp-489, Asp-491, and Asp-493 together coordinate Mg(2+).

It belongs to the RNA polymerase beta' chain family. RpoC1 subfamily. As to quaternary structure, in plastids the minimal PEP RNA polymerase catalytic core is composed of four subunits: alpha, beta, beta', and beta''. When a (nuclear-encoded) sigma factor is associated with the core the holoenzyme is formed, which can initiate transcription. It depends on Mg(2+) as a cofactor. The cofactor is Zn(2+).

The protein resides in the plastid. Its subcellular location is the chloroplast. The enzyme catalyses RNA(n) + a ribonucleoside 5'-triphosphate = RNA(n+1) + diphosphate. In terms of biological role, DNA-dependent RNA polymerase catalyzes the transcription of DNA into RNA using the four ribonucleoside triphosphates as substrates. This is DNA-directed RNA polymerase subunit beta' from Draba nemorosa (Woodland whitlowgrass).